Consider the following 493-residue polypeptide: Dipeptide permease D (493 aa).

13 consecutive transmembrane segments (helical) span residues 14–34 (VVALQIWEYFSFYGMRALLIL), 49–69 (ELFSAYCSLVYVTPILGGYLA), 91–111 (LVLGASEIAPTFLYLSLAIIV), 138–158 (GGFSLLYAAGNIGSIVAPIAC), 167–187 (WAMGFALAAIGMLAGLVIFLC), 212–232 (NWGWLLILLVAAPLLITVLFW), 235–255 (WSVYALIVATAISLVVLAKIY), 267–287 (LGLIVTLTLFSMLFWAFAQQG), 312–332 (MFQSVNAFAVMLCGVVLAWLV), 344–364 (IWGKFALGLGLMSAGFCILTL), 379–399 (LMVLGLAVMGFAELFIDPVAM), 413–433 (VLTGIYMLLSGAIANYLAGVI), and 458–478 (VFEQITWGALACVGVVLLIWL).

The protein belongs to the major facilitator superfamily. Proton-dependent oligopeptide transporter (POT/PTR) (TC 2.A.17) family. DtpD subfamily.

Its subcellular location is the cell inner membrane. In terms of biological role, probable proton-dependent permease that transports dipeptides. In Salmonella paratyphi C (strain RKS4594), this protein is Dipeptide permease D.